The chain runs to 163 residues: 3-hydroxyacyl-[acyl-carrier-protein] dehydratase FabZ (163 aa).

Histidine 64 is an active-site residue.

It belongs to the thioester dehydratase family. FabZ subfamily.

Its subcellular location is the cytoplasm. It carries out the reaction a (3R)-hydroxyacyl-[ACP] = a (2E)-enoyl-[ACP] + H2O. Involved in unsaturated fatty acids biosynthesis. Catalyzes the dehydration of short chain beta-hydroxyacyl-ACPs and long chain saturated and unsaturated beta-hydroxyacyl-ACPs. This chain is 3-hydroxyacyl-[acyl-carrier-protein] dehydratase FabZ, found in Caulobacter sp. (strain K31).